The primary structure comprises 378 residues: Alpha-D-ribose 1-methylphosphonate 5-triphosphate diphosphatase (378 aa).

This sequence belongs to the metallo-dependent hydrolases superfamily.

It carries out the reaction alpha-D-ribose 1-methylphosphonate 5-triphosphate + H2O = alpha-D-ribose 1-methylphosphonate 5-phosphate + diphosphate + H(+). In terms of biological role, catalyzes the hydrolysis of alpha-D-ribose 1-methylphosphonate triphosphate (RPnTP) to form alpha-D-ribose 1-methylphosphonate phosphate (PRPn) and diphosphate. The polypeptide is Alpha-D-ribose 1-methylphosphonate 5-triphosphate diphosphatase (phnM) (Escherichia coli (strain K12)).